The primary structure comprises 514 residues: Na(+)/H(+) antiporter NhaB (514 aa).

12 helical membrane passes run 23–43 (LALL…PFIA), 63–83 (PLLP…TSAA), 97–117 (LLLM…LFIF), 120–140 (LLLS…AAAF), 144–164 (FLDA…FYGI), 202–222 (LMMH…VGEP), 238–258 (FFLR…LTCM), 303–323 (AVIG…VGLI), 357–377 (LTVF…APII), 391–411 (LFYL…VGTI), 447–467 (ATPN…APLI), and 475–495 (VWMA…CVEF).

This sequence belongs to the NhaB Na(+)/H(+) (TC 2.A.34) antiporter family.

The protein localises to the cell inner membrane. The catalysed reaction is 2 Na(+)(in) + 3 H(+)(out) = 2 Na(+)(out) + 3 H(+)(in). Its function is as follows. Na(+)/H(+) antiporter that extrudes sodium in exchange for external protons. In Salmonella choleraesuis (strain SC-B67), this protein is Na(+)/H(+) antiporter NhaB.